Here is a 187-residue protein sequence, read N- to C-terminus: Peptidyl-tRNA hydrolase (187 aa).

Residue tyrosine 14 participates in tRNA binding. Histidine 19 (proton acceptor) is an active-site residue. Positions 64, 66, and 112 each coordinate tRNA.

It belongs to the PTH family. In terms of assembly, monomer.

Its subcellular location is the cytoplasm. The catalysed reaction is an N-acyl-L-alpha-aminoacyl-tRNA + H2O = an N-acyl-L-amino acid + a tRNA + H(+). Functionally, hydrolyzes ribosome-free peptidyl-tRNAs (with 1 or more amino acids incorporated), which drop off the ribosome during protein synthesis, or as a result of ribosome stalling. In terms of biological role, catalyzes the release of premature peptidyl moieties from peptidyl-tRNA molecules trapped in stalled 50S ribosomal subunits, and thus maintains levels of free tRNAs and 50S ribosomes. The protein is Peptidyl-tRNA hydrolase of Bdellovibrio bacteriovorus (strain ATCC 15356 / DSM 50701 / NCIMB 9529 / HD100).